We begin with the raw amino-acid sequence, 183 residues long: Inner membrane protein p54 (183 aa).

A helical membrane pass occupies residues 32–52 (YTILIAIVVLVIIIIVLIYLF). Positions 81 to 157 (EVTPQPGTSK…PYTTVTTQNT (77 aa)) are disordered. The segment covering 111-122 (RPATNKPVTDNP) has biased composition (polar residues). The span at 130–143 (ATGGPAAAPAAASA) shows a compositional bias: low complexity. The segment at 149 to 161 (YTTVTTQNTASQT) is interaction with host DYNLL1.

The protein belongs to the asfivirus envelope protein p54 family. As to quaternary structure, interacts with the host light chain cytoplasmic dynein DYNLL1; this interaction is critical for intracellular microtubule-dependent virus transport toward viral factories.

It localises to the virion membrane. The protein localises to the host cytoplasm. The protein resides in the host cytoskeleton. Its subcellular location is the host endoplasmic reticulum membrane. In terms of biological role, inner envelope protein involved, through its interaction with host dynein, in the intracellular microtubule-dependent transport of viral capsid toward viral factories. Seems to induce caspase-3 activation and apoptosis. Plays a role in virion morphogenesis by recruiting and transforming the host ER membranes into the precursors of the viral envelope. Involved in virus attachment to the host cell. This chain is Inner membrane protein p54, found in Ornithodoros (relapsing fever ticks).